Here is a 484-residue protein sequence, read N- to C-terminus: Adenylosuccinate lyase (484 aa).

Ala-2 carries the N-acetylalanine modification. Residues 20–21 (RY), 85–87 (RHD), and 111–112 (TS) each bind substrate. At Lys-147 the chain carries N6-acetyllysine. The active-site Proton donor/acceptor is the His-159. Gln-241 lines the substrate pocket. The Proton donor/acceptor role is filled by Ser-289. Lys-295 is subject to N6-acetyllysine. 4 residues coordinate substrate: Arg-303, Arg-329, Ser-334, and Arg-338. Lys-415 participates in a covalent cross-link: Glycyl lysine isopeptide (Lys-Gly) (interchain with G-Cter in SUMO1).

This sequence belongs to the lyase 1 family. Adenylosuccinate lyase subfamily. As to quaternary structure, homotetramer. Residues from neighboring subunits contribute catalytic and substrate-binding residues to each active site. In terms of tissue distribution, ubiquitously expressed. Both isoforms are produced by all tissues. Isoform 2 is 10-fold less abundant than isoform 1.

It catalyses the reaction N(6)-(1,2-dicarboxyethyl)-AMP = fumarate + AMP. The catalysed reaction is (2S)-2-[5-amino-1-(5-phospho-beta-D-ribosyl)imidazole-4-carboxamido]succinate = 5-amino-1-(5-phospho-beta-D-ribosyl)imidazole-4-carboxamide + fumarate. Its pathway is purine metabolism; AMP biosynthesis via de novo pathway; AMP from IMP: step 2/2. It participates in purine metabolism; IMP biosynthesis via de novo pathway; 5-amino-1-(5-phospho-D-ribosyl)imidazole-4-carboxamide from 5-amino-1-(5-phospho-D-ribosyl)imidazole-4-carboxylate: step 2/2. With respect to regulation, the enzyme reaction kinetics indicate cooperativity between subunits. In terms of biological role, catalyzes two non-sequential steps in de novo AMP synthesis: converts (S)-2-(5-amino-1-(5-phospho-D-ribosyl)imidazole-4-carboxamido)succinate (SAICAR) to fumarate plus 5-amino-1-(5-phospho-D-ribosyl)imidazole-4-carboxamide, and thereby also contributes to de novo IMP synthesis, and converts succinyladenosine monophosphate (SAMP) to AMP and fumarate. The protein is Adenylosuccinate lyase (ADSL) of Homo sapiens (Human).